Consider the following 628-residue polypeptide: Glutamyl-tRNA(Gln) amidotransferase subunit E (628 aa).

It belongs to the GatB/GatE family. GatE subfamily. As to quaternary structure, heterodimer of GatD and GatE.

The catalysed reaction is L-glutamyl-tRNA(Gln) + L-glutamine + ATP + H2O = L-glutaminyl-tRNA(Gln) + L-glutamate + ADP + phosphate + H(+). In terms of biological role, allows the formation of correctly charged Gln-tRNA(Gln) through the transamidation of misacylated Glu-tRNA(Gln) in organisms which lack glutaminyl-tRNA synthetase. The reaction takes place in the presence of glutamine and ATP through an activated gamma-phospho-Glu-tRNA(Gln). The GatDE system is specific for glutamate and does not act on aspartate. The chain is Glutamyl-tRNA(Gln) amidotransferase subunit E from Pyrococcus furiosus (strain ATCC 43587 / DSM 3638 / JCM 8422 / Vc1).